Consider the following 932-residue polypeptide: PMS1 protein homolog 1 (932 aa).

Residues 465-493 (TQSENGNKDHIDESGENEEEAGLENSSEI) form a disordered region. Residues 571–639 (IKKPMSASAL…RYNSQMKRAI (69 aa)) constitute a DNA-binding region (HMG box).

The protein belongs to the DNA mismatch repair MutL/HexB family. In terms of assembly, component of the DNA mismatch repair (MMR) complex composed at least of MSH2, MSH3, MSH6, PMS1 and MLH1. The MutL-beta complex is a heterodimer of PMS1 and MLH1. Interacts with MCM9.

Its subcellular location is the nucleus. Its function is as follows. Probably involved in the repair of mismatches in DNA. The protein is PMS1 protein homolog 1 (PMS1) of Homo sapiens (Human).